Consider the following 140-residue polypeptide: Nucleoside diphosphate kinase (140 aa).

Lys11, Phe59, Arg87, Thr93, Arg104, and Asn114 together coordinate ATP. His117 serves as the catalytic Pros-phosphohistidine intermediate.

It belongs to the NDK family. As to quaternary structure, homotetramer. Mg(2+) serves as cofactor.

It localises to the cytoplasm. It carries out the reaction a 2'-deoxyribonucleoside 5'-diphosphate + ATP = a 2'-deoxyribonucleoside 5'-triphosphate + ADP. The catalysed reaction is a ribonucleoside 5'-diphosphate + ATP = a ribonucleoside 5'-triphosphate + ADP. Functionally, major role in the synthesis of nucleoside triphosphates other than ATP. The ATP gamma phosphate is transferred to the NDP beta phosphate via a ping-pong mechanism, using a phosphorylated active-site intermediate. This chain is Nucleoside diphosphate kinase, found in Sinorhizobium fredii (strain NBRC 101917 / NGR234).